A 231-amino-acid chain; its full sequence is MWAWALLPICLTVWATGGIWIVYAMSVSNGSVNLSDGFPYISVSGTYPPQSCVFGQVLNVGAMLAVWISVIRFQQIRDYNCHSVLNSVSLATGILCALGTSIVGNFQQSNQLQTHLAGAFLAFIIGNVYFWMQTALTYMVKPKHGGCYIGPIRFCLSIACTALIVAMAVFLKMNMKSVSAICEWIVAMILFLLYGLFAVDFWHLDGHFFHVKKRRTVIPNEMEVSTVTLSI.

Position 1 (Met1) is a topological domain, cytoplasmic. The helical transmembrane segment at 2–22 (WAWALLPICLTVWATGGIWIV) threads the bilayer. The Extracellular portion of the chain corresponds to 23–50 (YAMSVSNGSVNLSDGFPYISVSGTYPPQ). Residues Asn29 and Asn33 are each glycosylated (N-linked (GlcNAc...) asparagine). The chain crosses the membrane as a helical span at residues 51–71 (SCVFGQVLNVGAMLAVWISVI). Residues 72–83 (RFQQIRDYNCHS) are Cytoplasmic-facing. Residues 84–104 (VLNSVSLATGILCALGTSIVG) form a helical membrane-spanning segment. The Extracellular portion of the chain corresponds to 105–115 (NFQQSNQLQTH). The chain crosses the membrane as a helical span at residues 116–136 (LAGAFLAFIIGNVYFWMQTAL). At 137 to 150 (TYMVKPKHGGCYIG) the chain is on the cytoplasmic side. A helical transmembrane segment spans residues 151-171 (PIRFCLSIACTALIVAMAVFL). The Extracellular segment spans residues 172–183 (KMNMKSVSAICE). The helical transmembrane segment at 184-204 (WIVAMILFLLYGLFAVDFWHL) threads the bilayer. Over 205 to 231 (DGHFFHVKKRRTVIPNEMEVSTVTLSI) the chain is Cytoplasmic.

This sequence belongs to the DRAM/TMEM150 family.

Its subcellular location is the cell membrane. The protein localises to the endosome membrane. The protein resides in the cytoplasmic vesicle. It localises to the autophagosome membrane. Its function is as follows. Modulator of macroautophagy that causes accumulation of autophagosomes under basal conditions and enhances autophagic flux. Represses cell death and promotes long-term clonogenic survival of cells grown in the absence of glucose in a macroautophagy-independent manner. May have some role in extracellular matrix engulfment or growth factor receptor recycling, both of which can modulate cell survival. The chain is Modulator of macroautophagy TMEM150B-B from Xenopus laevis (African clawed frog).